The chain runs to 55 residues: Large ribosomal subunit protein bL33 (55 aa).

Positions 1–10 are enriched in basic and acidic residues; sequence MAKGGREKIK. The tract at residues 1-27 is disordered; the sequence is MAKGGREKIKLQSTAGTGHFYTTDKNK.

The protein belongs to the bacterial ribosomal protein bL33 family.

This chain is Large ribosomal subunit protein bL33, found in Polaromonas naphthalenivorans (strain CJ2).